Here is a 495-residue protein sequence, read N- to C-terminus: Cornulin (495 aa).

The 36-residue stretch at 49-84 (HDPATVDEVLRLLDEDHTGTVEFKEFLVLVFKVAQA) folds into the EF-hand domain. Ca(2+) contacts are provided by D62, D64, T66, T68, and E73. Disordered stretches follow at residues 96-439 (ACGS…TVVG) and 460-481 (LHTS…KRGI). Over residues 99–110 (SQESGSLHSGAS) the composition is skewed to polar residues. Residues 137 to 151 (HRQSQQGSRGQNRPG) show a composition bias toward low complexity. Positions 152 to 194 (VQTQGQATGSAWVSSYDRQAESQSQERISPQIQLSGQTEQTQK) are enriched in polar residues. Residues 196 to 222 (GEGKRNQTTEMRPERQPQTREQDRAHQ) show a composition bias toward basic and acidic residues. Over residues 226-242 (TVTGSGTQTQAGATQTV) the composition is skewed to low complexity. Composition is skewed to polar residues over residues 243-282 (EQDS…SQAV) and 290-303 (QAGT…QTVE). Over residues 307–324 (SHQTGSTSTQTQESTNGQ) the composition is skewed to low complexity. Polar residues predominate over residues 334 to 355 (GRSQTSQAVTGGHTQIQAGSHT). Residues 374-385 (QGQTQTQPGSGQ) are compositionally biased toward low complexity. Polar residues-rich tracts occupy residues 403–420 (QAQT…WSST) and 460–473 (LHTS…QDAA).

It belongs to the S100-fused protein family. As to quaternary structure, homodimer. Expressed in the basal skin layer (at protein level). Squamous epithelia cell-specific. Expressed in the esophagus (periphery of the cells of the granular and the upper spinous layers), foreskin (granular and lower cornified cells), scalp skin (granular layer), inner root sheath of the hair follicle and in primary keratinocytes (at protein level). Expressed in the squamous epithelium of the cervix, esophagus, foreskin and larynx. Expressed in the fetal bladder and scalp skin. Expressed at very low levels in the lung, kidney, uterus, skeletal muscle, heart and fetal brain. Undetectable or barely detectable in esophageal and oral squamous cell carcinoma compared with the matched adjacent normal esophageal mucosa. Undetectable or barely detectable in larynx and esophagus from patients with pH-documented laryngopharyngeal reflux (LPR).

The protein localises to the cytoplasm. Its function is as follows. Promotes cell proliferation, G1/S cell cycle progression and induces expression of the cell cycle regulator CCND1. Regulates proliferation induced by pro-inflammatory cytokine response via activation of NFKB1 and PI3K/AKT signaling pathways. In Homo sapiens (Human), this protein is Cornulin (CRNN).